We begin with the raw amino-acid sequence, 664 residues long: Translation factor guf1, mitochondrial (664 aa).

Residues 1-43 (MRGCLQLARWLSAGPKCPAASLPKAPSGLYNTIRSFTSSAQLA) constitute a mitochondrion transit peptide. A tr-type G domain is found at 66–246 (DRYRNFCIVA…TVVEKIPAPV (181 aa)). Residues 75–82 (AHVDHGKS), 139–143 (DTPGH), and 193–196 (NKVD) contribute to the GTP site.

It belongs to the TRAFAC class translation factor GTPase superfamily. Classic translation factor GTPase family. LepA subfamily.

It is found in the mitochondrion inner membrane. The enzyme catalyses GTP + H2O = GDP + phosphate + H(+). Functionally, promotes mitochondrial protein synthesis. May act as a fidelity factor of the translation reaction, by catalyzing a one-codon backward translocation of tRNAs on improperly translocated ribosomes. Binds to mitochondrial ribosomes in a GTP-dependent manner. This chain is Translation factor guf1, mitochondrial (guf1), found in Aspergillus oryzae (strain ATCC 42149 / RIB 40) (Yellow koji mold).